The sequence spans 354 residues: G-protein coupled estrogen receptor 1 (354 aa).

At 1–40 (MEEQTTSLVWIYVNSTEQLNTSYEYNTTYLIEDSDKYQSY) the chain is on the extracellular side. The helical transmembrane segment at 41-61 (VIGLFLSCLYTILLFPIGFIG) threads the bilayer. At 62–81 (NILILVVNLNHRGKMAIPDL) the chain is on the cytoplasmic side. Residues 82–102 (YFVNLAVADLILVADSLIEVF) traverse the membrane as a helical segment. Topologically, residues 103-112 (NLNEKYYDYA) are extracellular. Residues 113–133 (VLCTFMSLFLQVNMYSSIFFL) traverse the membrane as a helical segment. C115 and C192 are joined by a disulfide. The Cytoplasmic portion of the chain corresponds to 134–160 (TWMSFDRYIALANSMSSSPLRTMQHAK). Residues 161 to 181 (LSCGLIWMASILATLLPFTIV) traverse the membrane as a helical segment. Residues 182-202 (QTQHRGEVHFCFANVFEIQWL) are Extracellular-facing. Residues 203–223 (EVTIGFLVPFSIIGLCYSLIG) traverse the membrane as a helical segment. Residues 224-245 (RILMRSQKHRGLWPRRQKALRM) lie on the Cytoplasmic side of the membrane. A helical membrane pass occupies residues 246–266 (IVVVVLVFFICWLPENVFISI). The Extracellular segment spans residues 267–292 (QLLQGTADPSQRTATTLRHDYPLTGH). Residues 293–313 (IVNLAAFSNSCLNPIIYSFLG) traverse the membrane as a helical segment. The Cytoplasmic portion of the chain corresponds to 314–353 (ETFRDKLRLFIKQKASWSVVNRFCHHGLDLHLPVRSEVSE).

The protein belongs to the G-protein coupled receptor 1 family. Homodimer. Heterodimer. Expressed in oocytes (at protein level). Highly expressed in brain, heart, testis and ovary. Weakly expressed in muscle and intestine.

It is found in the nucleus. It localises to the cytoplasm. The protein localises to the perinuclear region. Its subcellular location is the cytoskeleton. The protein resides in the cytoplasmic vesicle membrane. It is found in the cell membrane. It localises to the basolateral cell membrane. The protein localises to the endoplasmic reticulum membrane. Its subcellular location is the early endosome. The protein resides in the recycling endosome. It is found in the golgi apparatus. It localises to the trans-Golgi network. The protein localises to the golgi apparatus membrane. Its subcellular location is the cell projection. The protein resides in the dendrite. It is found in the dendritic spine membrane. It localises to the axon. The protein localises to the postsynaptic density. Its subcellular location is the mitochondrion membrane. In terms of biological role, membrane G-protein coupled estrogen receptor that binds to 17-beta-estradiol (E2) with high affinity, leading to rapid and transient activation of numerous intracellular signaling pathways. Plays a role in the embryonic development of sensory and motor neurons. May induce apoptosis and reduce proliferation of brain cells. Involved in maintenance of meiotic arrest in oocytes. The sequence is that of G-protein coupled estrogen receptor 1 (gper1) from Micropogonias undulatus (Atlantic croaker).